The sequence spans 2368 residues: Voltage-dependent P/Q-type calcium channel subunit alpha-1A (2368 aa).

Residues 1-100 (MARFGDEMPG…KYAKKITEWP (100 aa)) lie on the Cytoplasmic side of the membrane. Residues 65 to 365 (NPIPVRQNCL…LVLGVLSGEF (301 aa)) form an I repeat. The chain crosses the membrane as a helical span at residues 101–119 (PFEYMILATIIANCIVLAL). Topologically, residues 120-138 (EQHLPDDDKTPMSERLDDT) are extracellular. The chain crosses the membrane as a helical span at residues 139-156 (EPYFIGIFCFEAGIKIVA). Residues 157 to 168 (LGFAFHKGSYLR) are Cytoplasmic-facing. The helical transmembrane segment at 169-184 (NGWNVMDFVVVLTGIL) threads the bilayer. The Extracellular segment spans residues 185–192 (ATVGTEFD). A helical transmembrane segment spans residues 193–211 (LRTLRAVRVLRPLKLVSGI). Residues 212–230 (PSLQVVLKSIMKAMIPLLQ) lie on the Cytoplasmic side of the membrane. A helical membrane pass occupies residues 231–250 (IGLLLFFAILIFAIIGLEFY). Topologically, residues 251–337 (MGKFHTTCFE…NSNDASGNTW (87 aa)) are extracellular. The N-linked (GlcNAc...) asparagine glycan is linked to Asn-285. Glu-320 contributes to the Ca(2+) binding site. The chain crosses the membrane as a helical span at residues 338–362 (NWLYFIPLIIIGSFFMLNLVLGVLS). Over 363 to 489 (GEFAKERERV…FYIRRMVKTQ (127 aa)) the chain is Cytoplasmic. The segment at 385–402 (QQIERELNGYMEWISKAE) is binding to the beta subunit. Thr-411 is subject to Phosphothreonine. Phosphoserine is present on residues Ser-450 and Ser-453. The II repeat unit spans residues 475–719 (ERRMRFYIRR…VFLAIAVDNL (245 aa)). A helical membrane pass occupies residues 490-509 (AFYWTVLSLVALNTLCVAIV). The Extracellular portion of the chain corresponds to 510-523 (HYNQPEWLSDFLYY). The chain crosses the membrane as a helical span at residues 524-543 (AEFIFLGLFMSEMFIKMYGL). Topologically, residues 544 to 551 (GTRPYFHS) are cytoplasmic. Residues 552–570 (SFNCFDCGVIIGSIFEVIW) traverse the membrane as a helical segment. Over 571–580 (AVIKPGTSFG) the chain is Extracellular. A helical transmembrane segment spans residues 581 to 599 (ISVLRALRLLRIFKVTKYW). The Cytoplasmic portion of the chain corresponds to 600 to 618 (ASLRNLVVSLLNSMKSIIS). Residues 619–638 (LLFLLFLFIVVFALLGMQLF) form a helical membrane-spanning segment. Residues 639–691 (GGQFNFDEGTPPTNFDTFPAAIMTVFQILTGEDWNEVMYDGIKSQGGVQGGMV) lie on the Extracellular side of the membrane. Glu-670 contacts Ca(2+). A helical membrane pass occupies residues 692 to 716 (FSIYFIVLTLFGNYTLLNVFLAIAV). Over 717–1190 (DNLANAQELT…TNPLRRLCHY (474 aa)) the chain is Cytoplasmic. 2 positions are modified to phosphoserine: Ser-752 and Ser-755. Positions 762-781 (AVKEQQKNQKPTKSVWEQRT) are disordered. Positions 769-779 (NQKPTKSVWEQ) are enriched in polar residues. Position 792 is a phosphoserine (Ser-792). Disordered stretches follow at residues 823-1117 (PLVV…RKPE) and 1137-1170 (VNKN…KPMP). Composition is skewed to basic and acidic residues over residues 850–862 (RPRE…DARR), 871–924 (APGR…EGEP), and 932–958 (RPGD…RAAD). Ser-1038, Ser-1042, and Ser-1051 each carry phosphoserine. A compositionally biased stretch (polar residues) spans 1056 to 1073 (GNSTNPGPALATNPQNAA). The segment covering 1074 to 1083 (SRRTPNNPGN) has biased composition (low complexity). Residues 1094 to 1111 (ENSLIVTNPSSTQPNSAK) are compositionally biased toward polar residues. Residues 1153–1163 (KKEEEEADPGE) are compositionally biased toward acidic residues. The III repeat unit spans residues 1182-1465 (NPLRRLCHYI…IFVALIIITF (284 aa)). The chain crosses the membrane as a helical span at residues 1191-1214 (ILNLRYFEMCILMVIAMSSIALAA). Residues 1215-1231 (EDPVQPNAPRNNVLRYF) lie on the Extracellular side of the membrane. A helical membrane pass occupies residues 1232–1251 (DYVFTGVFTFEMVIKMIDLG). Over 1252-1258 (LVLHQGA) the chain is Cytoplasmic. Residues 1259–1282 (YFRDLWNILDFIVVSGALVAFAFT) traverse the membrane as a helical segment. The Extracellular portion of the chain corresponds to 1283-1293 (GNSKGKDINTI). A helical membrane pass occupies residues 1294–1311 (KSLRVLRVLRPLKTIKRL). At 1312–1330 (PKLKAVFDCVVNSLKNVFN) the chain is on the cytoplasmic side. The chain crosses the membrane as a helical span at residues 1331–1350 (ILIVYMLFMFIFAVVAVQLF). The Extracellular segment spans residues 1351–1437 (KGKFFHCTDE…QGPSPGYRME (87 aa)). Position 1411 (Glu-1411) interacts with Ca(2+). Residues 1438–1462 (MSIFYVVYFVVFPFFFVNIFVALII) form a helical membrane-spanning segment. Topologically, residues 1463–1518 (ITFQEQGDKMMEEYSLEKNERACIDFAISAKPLTRHMPQNKQSFQYRMWQFVVSPP) are cytoplasmic. One copy of the IV repeat lies at 1502 to 1765 (NKQSFQYRMW…LFVAVIMDNF (264 aa)). The chain crosses the membrane as a helical span at residues 1519-1537 (FEYTIMAMIALNTIVLMMK). Residues 1538–1551 (FYGASVAYENALRV) lie on the Extracellular side of the membrane. A helical membrane pass occupies residues 1552-1573 (FNIVFTSLFSLECVLKVMAFGI). Residues 1574–1580 (LNYFRDA) are Cytoplasmic-facing. Residues 1581–1600 (WNIFDFVTVLGSITDILVTE) form a helical membrane-spanning segment. At 1601 to 1607 (FGNNFIN) the chain is on the extracellular side. Asn-1607 is a glycosylation site (N-linked (GlcNAc...) asparagine). A helical membrane pass occupies residues 1608-1626 (LSFLRLFRAARLIKLLRQG). At 1627–1645 (YTIRILLWTFVQSFKALPY) the chain is on the cytoplasmic side. The helical transmembrane segment at 1646-1665 (VCLLIAMLFFIYAIIGMQVF) threads the bilayer. Residues 1666–1737 (GNIGIDGEDE…ILTADCGNEF (72 aa)) are Extracellular-facing. Residues 1738–1763 (AYFYFVSFIFLCSFLMLNLFVAVIMD) traverse the membrane as a helical segment. The Cytoplasmic portion of the chain corresponds to 1764-2368 (NFEYLTRDSS…AYSESEDDWC (605 aa)). Thr-1935 bears the Phosphothreonine mark. Residues 1940–2368 (QRMEPPSPTQ…AYSESEDDWC (429 aa)) form a disordered region. 2 stretches are compositionally biased toward polar residues: residues 1948–1963 (TQEG…STQL) and 1981–1997 (SWVT…TGTW). Ser-1998, Ser-2016, Ser-2028, Ser-2030, Ser-2071, and Ser-2091 each carry phosphoserine. Residues 2008–2017 (PNSQPNSQSV) show a composition bias toward polar residues. A compositionally biased stretch (basic and acidic residues) spans 2018-2034 (EMREMGTDGYSDSEHYL). The segment covering 2063-2073 (DLSTISDTSPM) has biased composition (polar residues). Composition is skewed to basic and acidic residues over residues 2085–2102 (RRLD…ENQR) and 2143–2153 (PSKDRDQDRGR). The segment covering 2154–2172 (PKDRKHRPHHHHHHHHHHP) has biased composition (basic residues). A compositionally biased stretch (basic and acidic residues) spans 2173–2209 (PAPDRDRYAQERPDTGRARAREQRWSRSPSEGREHTT). Positions 2213-2231 (GSSSVSGSPAPSTSGTSTP) are enriched in low complexity. A compositionally biased stretch (basic and acidic residues) spans 2289 to 2305 (EGPRPRGADYTEPDSPR).

The protein belongs to the calcium channel alpha-1 subunit (TC 1.A.1.11) family. CACNA1A subfamily. As to quaternary structure, voltage-dependent calcium channels are multisubunit complexes, consisting of alpha-1, alpha-2, beta and delta subunits in a 1:1:1:1 ratio. The channel activity is directed by the pore-forming and voltage-sensitive alpha-1 subunit. In many cases, this subunit is sufficient to generate voltage-sensitive calcium channel activity. The auxiliary subunits beta and alpha-2/delta linked by a disulfide bridge regulate the channel activity. Interacts with CABP1. Interacts with the spider omega-agatoxin-IVA (AC P30288). Interacts with TSPOAP1. Brain specific; mainly found in the cerebellum, olfactory bulb, cerebral cortex, hippocampus, and inferior colliculus. In the hippocampus, expression occurs in pyramidal and granule neurons, as well as in interneurons. Purkinje cells contain predominantly P-type VSCC, the Q-type being a prominent calcium current in cerebellar granule cells.

It localises to the cell membrane. It carries out the reaction Ca(2+)(in) = Ca(2+)(out). Functionally, voltage-sensitive calcium channels (VSCC) mediate the entry of calcium ions into excitable cells and are also involved in a variety of calcium-dependent processes, including muscle contraction, hormone or neurotransmitter release, gene expression, cell motility, cell division and cell death. The isoform alpha-1A gives rise to P and/or Q-type calcium currents. P/Q-type calcium channels belong to the 'high-voltage activated' (HVA) group and are specifically blocked by the spider omega-agatoxin-IVA (AC P54282). They are however insensitive to dihydropyridines (DHP). In Mus musculus (Mouse), this protein is Voltage-dependent P/Q-type calcium channel subunit alpha-1A.